Consider the following 1131-residue polypeptide: Topless-related protein 2 (1131 aa).

The LisH domain occupies 4-36 (LSRELVFLILQFLDEEKFKESVHKLEQESGFFF). In terms of domain architecture, CTLH spans 34 to 92 (FFFNIKYFEEKALAGEWDEVEKYLSGFTKVDDNRYSMKIFFEIRKQKYLEALDRNDRAK). Threonine 214 bears the Phosphothreonine mark. WD repeat units follow at residues 345–385 (RQGS…KVVT), 407–446 (EPSISVTRVAWSPDGNLLGVSFTKHLIHVYAYQGSDLRQH), 451–493 (AHVG…FTFE), 495–535 (HEAP…SRVD), 585–624 (FRKKSAGVVQFDTTRNRFLAVGEDNQIKFWNMDNTNLLTV), 629–668 (GGLPNLPRLRFNKDGNLLAVTTADNGFKILANTDGLRTLR), 763–802 (DSVSKVARLLYTNSGVGVLALGSNGVQRLWKWIRNEQNPT), 829–867 (NPEGSVPCIALSKNDSYVMSACGGKVSLFNMMTFKVMTT), 870–910 (PPPP…VKTK), 913–952 (GHQKHITGLAFSTALNILVSSGADAQLFFWTADSWEKKKS), 959–999 (PGKA…CIHK), and 1005–1044 (ALSSPITSASYSCNSQLVYASFADGNIAVFDAESLRLRCR). The disordered stretch occupies residues 1099–1131 (VGVAAGSDKAGTENGRPSSSSAANNSSSDQIQR). The span at 1116–1131 (SSSSAANNSSSDQIQR) shows a compositional bias: low complexity.

As to quaternary structure, tetramer. Interacts with NINJA/AFPH2. Interacts with SMXL6, SMXL7 and SMXL8. Interacts with SPL (via EAR motif). Interacts with SPEAR3/TIE1.

The protein localises to the nucleus. Transcriptional corepressor. Negative regulator of jasmonate responses. This chain is Topless-related protein 2 (TPR2), found in Arabidopsis thaliana (Mouse-ear cress).